Reading from the N-terminus, the 156-residue chain is Cellulose synthase operon protein D (156 aa).

The protein operates within glycan metabolism; bacterial cellulose biosynthesis. Its function is as follows. May have a major role in the perfection of crystallization, involved either in the pore structure itself or in the organization of the pores within the linear array of terminal synthesizing complexes (TCs). The protein is Cellulose synthase operon protein D of Komagataeibacter xylinus (Gluconacetobacter xylinus).